A 59-amino-acid chain; its full sequence is Large ribosomal subunit protein uL30 (59 aa).

Belongs to the universal ribosomal protein uL30 family. In terms of assembly, part of the 50S ribosomal subunit.

This chain is Large ribosomal subunit protein uL30, found in Clostridium botulinum (strain Alaska E43 / Type E3).